The chain runs to 492 residues: Transmembrane protein 39B (492 aa).

The interval 1-53 is disordered; the sequence is MGGRRGPNRTSYYRNPLCEPGSSGASGGGHSSSASVSSVRSRSRTTSGTGLSS. Residue asparagine 8 is glycosylated (N-linked (GlcNAc...) asparagine). A compositionally biased stretch (low complexity) spans 31–53; sequence SSSASVSSVRSRSRTTSGTGLSS. The next 8 membrane-spanning stretches (helical) occupy residues 77–97, 115–135, 153–175, 185–205, 288–308, 322–342, 421–441, and 447–467; these read SILFELQLFFCQLIALFVHYI, TSLNFHLIDFNLLMVTTIVLG, SLFRSILLFLTRFTVLTATGWSL, TYSFLNLLFLCYPFGMYIPFL, EVLVSSMLSAYYVAFVPVWFV, LFLLVSISTSVILMQHLLPAS, ILNILLLLEGAVIVYQLYSLM, and HQTISLALILFSNYYAFFKLL.

It belongs to the TMEM39 family.

It localises to the endoplasmic reticulum membrane. May protect the cells against DNA damage caused by exposure to the cold-warming stress and facilitates tissue damage repair during the recovery phase. This Rattus norvegicus (Rat) protein is Transmembrane protein 39B.